The primary structure comprises 410 residues: Argininosuccinate synthase (410 aa).

6-14 (AYSGGLDTS) serves as a coordination point for ATP. L-citrulline is bound at residue tyrosine 84. Glycine 114 is a binding site for ATP. Positions 116, 120, and 121 each coordinate L-aspartate. Asparagine 120 contacts L-citrulline. Positions 124, 169, 178, 254, and 266 each coordinate L-citrulline.

This sequence belongs to the argininosuccinate synthase family. Type 1 subfamily. In terms of assembly, homotetramer.

It localises to the cytoplasm. The catalysed reaction is L-citrulline + L-aspartate + ATP = 2-(N(omega)-L-arginino)succinate + AMP + diphosphate + H(+). The protein operates within amino-acid biosynthesis; L-arginine biosynthesis; L-arginine from L-ornithine and carbamoyl phosphate: step 2/3. This chain is Argininosuccinate synthase, found in Pyrococcus furiosus (strain ATCC 43587 / DSM 3638 / JCM 8422 / Vc1).